A 294-amino-acid polypeptide reads, in one-letter code: 4-hydroxy-tetrahydrodipicolinate synthase (294 aa).

Threonine 45 is a pyruvate binding site. Residue tyrosine 133 is the Proton donor/acceptor of the active site. The active-site Schiff-base intermediate with substrate is the lysine 161. Isoleucine 203 lines the pyruvate pocket.

This sequence belongs to the DapA family. As to quaternary structure, homotetramer; dimer of dimers.

The protein resides in the cytoplasm. The enzyme catalyses L-aspartate 4-semialdehyde + pyruvate = (2S,4S)-4-hydroxy-2,3,4,5-tetrahydrodipicolinate + H2O + H(+). The protein operates within amino-acid biosynthesis; L-lysine biosynthesis via DAP pathway; (S)-tetrahydrodipicolinate from L-aspartate: step 3/4. Its function is as follows. Catalyzes the condensation of (S)-aspartate-beta-semialdehyde [(S)-ASA] and pyruvate to 4-hydroxy-tetrahydrodipicolinate (HTPA). This chain is 4-hydroxy-tetrahydrodipicolinate synthase, found in Buchnera aphidicola subsp. Baizongia pistaciae (strain Bp).